The sequence spans 511 residues: Adenosine deaminase 2 (511 aa).

The first 29 residues, 1 to 29, serve as a signal peptide directing secretion; it reads MLVDGPSERPALCFLLLAVAMSFFGSALS. Residues 30-100 form a dimerization region; the sequence is IDETRAHLLL…HLIERSQVFN (71 aa). Zn(2+) is bound by residues H112 and H114. D115 is a binding site for substrate. The N-linked (GlcNAc...) asparagine glycan is linked to N127. The tract at residues 127-185 is PRB domain; it reads NVTYRPHCHICFTPRGIMQFRFAHPTPRPSEKCSKWILLEDYRKRVQNVTEFDDSLLRN. A disulfide bond links C137 and C159. 2 N-linked (GlcNAc...) asparagine glycosylation sites follow: N174 and N185. Substrate-binding positions include 204 to 211, H293, and G326; that span reads WSKFETIF. A Zn(2+)-binding site is contributed by H356. The Proton donor role is filled by E359. Residue N378 is glycosylated (N-linked (GlcNAc...) asparagine). H384 functions as the Proton acceptor in the catalytic mechanism. D441 is a binding site for Zn(2+). D442 lines the substrate pocket.

This sequence belongs to the metallo-dependent hydrolases superfamily. Adenosine and AMP deaminases family. ADGF subfamily. Homodimer. Interacts with adenosine receptors. Binds heparin. It depends on Zn(2+) as a cofactor. As to expression, detected in blood plasma (at protein level). Widely expressed, with most abundant expression in human adult heart, lung, lymphoblasts, and placenta as well as fetal lung, liver, and kidney. In embryo, expressed in the outflow tract and atrium of the developing heart, the VII/VIII cranial nerve ganglion, and the notochord.

The protein localises to the secreted. It carries out the reaction adenosine + H2O + H(+) = inosine + NH4(+). Adenosine deaminase that may contribute to the degradation of extracellular adenosine, a signaling molecule that controls a variety of cellular responses. Requires elevated adenosine levels for optimal enzyme activity. Binds to cell surfaces via proteoglycans and may play a role in the regulation of cell proliferation and differentiation, independently of its enzyme activity. This Homo sapiens (Human) protein is Adenosine deaminase 2.